The primary structure comprises 134 residues: Holo-[acyl-carrier-protein] synthase (134 aa).

2 residues coordinate Mg(2+): Asp8 and Glu57.

The protein belongs to the P-Pant transferase superfamily. AcpS family. Mg(2+) is required as a cofactor.

The protein localises to the cytoplasm. The catalysed reaction is apo-[ACP] + CoA = holo-[ACP] + adenosine 3',5'-bisphosphate + H(+). Functionally, transfers the 4'-phosphopantetheine moiety from coenzyme A to a Ser of acyl-carrier-protein. The sequence is that of Holo-[acyl-carrier-protein] synthase from Rhizobium etli (strain CIAT 652).